Consider the following 280-residue polypeptide: UPF0273 protein SSO1861 (280 aa).

The KaiC domain maps to 2–246; sequence KRVKTYIPGL…YLKISNWSVS (245 aa). Residue 29 to 36 coordinates ATP; sequence GGPGTGKS.

This sequence belongs to the UPF0273 family.

In Saccharolobus solfataricus (strain ATCC 35092 / DSM 1617 / JCM 11322 / P2) (Sulfolobus solfataricus), this protein is UPF0273 protein SSO1861.